Here is a 75-residue protein sequence, read N- to C-terminus: Tautomerase PptA (75 aa).

P2 (proton acceptor; via imino nitrogen) is an active-site residue.

Belongs to the 4-oxalocrotonate tautomerase family. PptA subfamily. In terms of assembly, homodimer.

It localises to the cytoplasm. In Klebsiella pneumoniae (strain 342), this protein is Tautomerase PptA.